A 213-amino-acid chain; its full sequence is Adenylate kinase (213 aa).

10–15 provides a ligand contact to ATP; that stretch reads GSGKGS. Residues 30–60 are NMP; it reads STGNLFRAILKEDSELARKIKEINVSGGKLV. AMP is bound by residues Thr-31, Arg-36, 58-60, 87-90, and Gln-94; these read KLV and GYPR. The LID stretch occupies residues 123 to 160; that stretch reads GRWMCPKCAGIYNIHFKKPQVDGVCDNDQATLYQRADD. Arg-124 contributes to the ATP binding site. Residues Cys-127 and Cys-130 each coordinate Zn(2+). An ATP-binding site is contributed by 133-134; the sequence is IY. Residues Cys-147 and Asp-150 each contribute to the Zn(2+) site. Positions 157 and 168 each coordinate AMP. An ATP-binding site is contributed by Gln-196.

It belongs to the adenylate kinase family. In terms of assembly, monomer.

It is found in the cytoplasm. The catalysed reaction is AMP + ATP = 2 ADP. It participates in purine metabolism; AMP biosynthesis via salvage pathway; AMP from ADP: step 1/1. Its function is as follows. Catalyzes the reversible transfer of the terminal phosphate group between ATP and AMP. Plays an important role in cellular energy homeostasis and in adenine nucleotide metabolism. The chain is Adenylate kinase from Ureaplasma urealyticum serovar 10 (strain ATCC 33699 / Western).